A 453-amino-acid polypeptide reads, in one-letter code: Allantoinase (453 aa).

Zn(2+) is bound by residues H59, H61, K146, H186, H242, and D315. K146 bears the N6-carboxylysine mark.

It belongs to the metallo-dependent hydrolases superfamily. Allantoinase family. In terms of assembly, homotetramer. Zn(2+) is required as a cofactor. In terms of processing, carboxylation allows a single lysine to coordinate two zinc ions.

It catalyses the reaction (S)-allantoin + H2O = allantoate + H(+). Its pathway is nitrogen metabolism; (S)-allantoin degradation; allantoate from (S)-allantoin: step 1/1. Catalyzes the conversion of allantoin (5-ureidohydantoin) to allantoic acid by hydrolytic cleavage of the five-member hydantoin ring. The sequence is that of Allantoinase from Escherichia coli O127:H6 (strain E2348/69 / EPEC).